The following is a 119-amino-acid chain: Beta-2-microglobulin (119 aa).

An N-terminal signal peptide occupies residues 1 to 20 (MGRFVAVALLVLLSLSGLET). The Ig-like C1-type domain occupies 25–114 (PKIQVYSRHP…VTFSTPKTVK (90 aa)). C45 and C100 are disulfide-bonded.

It belongs to the beta-2-microglobulin family. Heterodimer of an alpha chain and a beta chain. Beta-2-microglobulin is the beta-chain of major histocompatibility complex class I molecules.

The protein resides in the secreted. Functionally, component of the class I major histocompatibility complex (MHC). Involved in the presentation of peptide antigens to the immune system. In Callicebus personatus nigrifrons (Black-fronted titi), this protein is Beta-2-microglobulin (B2M).